A 425-amino-acid polypeptide reads, in one-letter code: Dihydroorotase (425 aa).

Zn(2+) contacts are provided by histidine 58 and histidine 60. Residues 60–62 (HFR) and asparagine 92 each bind substrate. Zn(2+) contacts are provided by aspartate 150, histidine 177, and histidine 230. Residue asparagine 276 coordinates substrate. A Zn(2+)-binding site is contributed by aspartate 303. Aspartate 303 is a catalytic residue. Residues histidine 307 and 321 to 322 (FG) contribute to the substrate site.

Belongs to the metallo-dependent hydrolases superfamily. DHOase family. Class I DHOase subfamily. It depends on Zn(2+) as a cofactor.

The enzyme catalyses (S)-dihydroorotate + H2O = N-carbamoyl-L-aspartate + H(+). The protein operates within pyrimidine metabolism; UMP biosynthesis via de novo pathway; (S)-dihydroorotate from bicarbonate: step 3/3. Catalyzes the reversible cyclization of carbamoyl aspartate to dihydroorotate. This Pediococcus pentosaceus (strain ATCC 25745 / CCUG 21536 / LMG 10740 / 183-1w) protein is Dihydroorotase.